Consider the following 310-residue polypeptide: tRNA dimethylallyltransferase (310 aa).

9 to 16 (GPTAVGKT) contacts ATP. 11-16 (TAVGKT) serves as a coordination point for substrate. The interval 34-37 (DSMQ) is interaction with substrate tRNA.

It belongs to the IPP transferase family. As to quaternary structure, monomer. It depends on Mg(2+) as a cofactor.

It catalyses the reaction adenosine(37) in tRNA + dimethylallyl diphosphate = N(6)-dimethylallyladenosine(37) in tRNA + diphosphate. In terms of biological role, catalyzes the transfer of a dimethylallyl group onto the adenine at position 37 in tRNAs that read codons beginning with uridine, leading to the formation of N6-(dimethylallyl)adenosine (i(6)A). In Pediococcus pentosaceus (strain ATCC 25745 / CCUG 21536 / LMG 10740 / 183-1w), this protein is tRNA dimethylallyltransferase.